Consider the following 384-residue polypeptide: tRNA-specific 2-thiouridylase MnmA (384 aa).

Residues 9–16 (GMSGGVDS) and methionine 35 each bind ATP. Residues 95 to 97 (NPD) form an interaction with target base in tRNA region. Cysteine 100 functions as the Nucleophile in the catalytic mechanism. Cysteine 100 and cysteine 196 are disulfide-bonded. ATP is bound at residue glycine 124. An interaction with tRNA region spans residues 146–148 (KDQ). Cysteine 196 (cysteine persulfide intermediate) is an active-site residue. Positions 308–309 (RY) are interaction with tRNA.

The protein belongs to the MnmA/TRMU family.

It is found in the cytoplasm. The catalysed reaction is S-sulfanyl-L-cysteinyl-[protein] + uridine(34) in tRNA + AH2 + ATP = 2-thiouridine(34) in tRNA + L-cysteinyl-[protein] + A + AMP + diphosphate + H(+). Functionally, catalyzes the 2-thiolation of uridine at the wobble position (U34) of tRNA, leading to the formation of s(2)U34. The chain is tRNA-specific 2-thiouridylase MnmA from Paraburkholderia phymatum (strain DSM 17167 / CIP 108236 / LMG 21445 / STM815) (Burkholderia phymatum).